A 429-amino-acid chain; its full sequence is 4-hydroxy-3-methylbut-2-en-1-yl diphosphate synthase (flavodoxin) (429 aa).

[4Fe-4S] cluster is bound by residues cysteine 317, cysteine 320, cysteine 363, and glutamate 370.

It belongs to the IspG family. [4Fe-4S] cluster serves as cofactor.

It catalyses the reaction (2E)-4-hydroxy-3-methylbut-2-enyl diphosphate + oxidized [flavodoxin] + H2O + 2 H(+) = 2-C-methyl-D-erythritol 2,4-cyclic diphosphate + reduced [flavodoxin]. It participates in isoprenoid biosynthesis; isopentenyl diphosphate biosynthesis via DXP pathway; isopentenyl diphosphate from 1-deoxy-D-xylulose 5-phosphate: step 5/6. Converts 2C-methyl-D-erythritol 2,4-cyclodiphosphate (ME-2,4cPP) into 1-hydroxy-2-methyl-2-(E)-butenyl 4-diphosphate. In Deinococcus radiodurans (strain ATCC 13939 / DSM 20539 / JCM 16871 / CCUG 27074 / LMG 4051 / NBRC 15346 / NCIMB 9279 / VKM B-1422 / R1), this protein is 4-hydroxy-3-methylbut-2-en-1-yl diphosphate synthase (flavodoxin).